The following is a 298-amino-acid chain: Protoheme IX farnesyltransferase (298 aa).

The next 8 membrane-spanning stretches (helical) occupy residues 16–36 (VVAL…PGMP), 45–65 (ALGF…NQLL), 97–117 (VLIV…TAVL), 141–161 (IVIG…AVTG), 172–192 (SLLV…LAIF), 223–243 (VLLA…VFYL), 244–264 (GGAV…LDPP), and 277–297 (VVYL…LPWV).

It belongs to the UbiA prenyltransferase family. Protoheme IX farnesyltransferase subfamily.

The protein localises to the cell inner membrane. It carries out the reaction heme b + (2E,6E)-farnesyl diphosphate + H2O = Fe(II)-heme o + diphosphate. It functions in the pathway porphyrin-containing compound metabolism; heme O biosynthesis; heme O from protoheme: step 1/1. Functionally, converts heme B (protoheme IX) to heme O by substitution of the vinyl group on carbon 2 of heme B porphyrin ring with a hydroxyethyl farnesyl side group. The protein is Protoheme IX farnesyltransferase of Xanthomonas campestris pv. campestris (strain 8004).